A 409-amino-acid polypeptide reads, in one-letter code: Elongation factor Tu (409 aa).

Residues 10–214 (KPHANIGTIG…EVDAYIPTPE (205 aa)) form the tr-type G domain. The segment at 19–26 (GHVDHGKT) is G1. A GTP-binding site is contributed by 19–26 (GHVDHGKT). Mg(2+) is bound at residue threonine 26. The interval 60-64 (GITIN) is G2. Residues 81-84 (DCPG) are G3. GTP-binding positions include 81-85 (DCPGH) and 136-139 (NKED). Residues 136–139 (NKED) are G4. A G5 region spans residues 174 to 176 (SAL).

The protein belongs to the TRAFAC class translation factor GTPase superfamily. Classic translation factor GTPase family. EF-Tu/EF-1A subfamily. In terms of assembly, monomer.

Its subcellular location is the cytoplasm. It catalyses the reaction GTP + H2O = GDP + phosphate + H(+). GTP hydrolase that promotes the GTP-dependent binding of aminoacyl-tRNA to the A-site of ribosomes during protein biosynthesis. This chain is Elongation factor Tu, found in Synechococcus elongatus (strain ATCC 33912 / PCC 7942 / FACHB-805) (Anacystis nidulans R2).